Reading from the N-terminus, the 1040-residue chain is Kinesin-like protein KIN-14H (1040 aa).

In terms of domain architecture, Calponin-homology (CH) spans 54–176 (DLRRYEAARW…CVLALKSYRE (123 aa)). The interval 208–242 (SEVPVDAVTNSPSSTPSSEQPLLDQSDSNTKNDGT) is disordered. Polar residues predominate over residues 215-242 (VTNSPSSTPSSEQPLLDQSDSNTKNDGT). A Kinesin motor domain is found at 434–754 (SIRVYCRVRP…LKFAERVATV (321 aa)). Position 517-524 (517-524 (GQTGSGKT)) interacts with ATP. Positions 761 to 796 (VNKDTSEVKELKEQIASLKLALARKESGADQTQLQR) form a coiled coil. A compositionally biased stretch (low complexity) spans 809-818 (LGVSSSFSKS). Disordered stretches follow at residues 809 to 871 (LGVS…GKEE), 887 to 926 (EDEI…KCNS), and 969 to 1040 (MPRP…QNPK). The span at 840 to 851 (IEGQSDSASSLD) shows a compositional bias: polar residues. Residues 887–923 (EDEITRSSKPENRAHTQLEKRTSSLKREATRGVDKNK) are compositionally biased toward basic and acidic residues. Residues 1018–1031 (SPGQTSSRHNNSTV) are compositionally biased toward polar residues.

It belongs to the TRAFAC class myosin-kinesin ATPase superfamily. Kinesin family. KIN-14 subfamily.

The sequence is that of Kinesin-like protein KIN-14H from Arabidopsis thaliana (Mouse-ear cress).